Reading from the N-terminus, the 454-residue chain is Tumor necrosis factor receptor superfamily member 1A (454 aa).

An N-terminal signal peptide occupies residues 1–29 (MGLPTVPGLLLSLVLLALLMGIHPSGVTG). The Extracellular segment spans residues 30–212 (LVPSLGDREK…VTNPQDSGTA (183 aa)). TNFR-Cys repeat units follow at residues 43 to 82 (LCPQ…TVCR), 83 to 125 (ECEK…DTVC), 126 to 166 (GCKE…NTVC), and 167 to 196 (NCHA…KLCL). Disulfide bonds link Cys-44–Cys-58, Cys-59–Cys-72, Cys-62–Cys-81, Cys-84–Cys-99, Cys-102–Cys-117, Cys-105–Cys-125, Cys-127–Cys-143, Cys-146–Cys-158, Cys-149–Cys-166, Cys-168–Cys-179, Cys-182–Cys-195, and Cys-185–Cys-191. Asn-54 is a glycosylation site (N-linked (GlcNAc...) asparagine). An N-linked (GlcNAc...) asparagine glycan is attached at Asn-151. A glycan (N-linked (GlcNAc...) asparagine) is linked at Asn-202. The helical transmembrane segment at 213–235 (VLLPLVILLGLCLLSFIFISLMC) threads the bilayer. At 236–454 (RYPRWRPEVY…APSSTTRLPR (219 aa)) the chain is on the cytoplasmic side. Positions 339 to 349 (VQKWEDSAHPQ) are N-SMase activation domain (NSD). The Death domain maps to 356-441 (LAILYAVVDG…GCLENILEAL (86 aa)). A glycan ((Microbial infection) N-beta-linked (GlcNAc) arginine) is linked at Arg-376.

Binding of TNF to the extracellular domain leads to homotrimerization. The aggregated death domains provide a novel molecular interface that interacts specifically with the death domain of TRADD. Various TRADD-interacting proteins such as TRAFS, RIPK1 and possibly FADD, are recruited to the complex by their association with TRADD. This complex activates at least two distinct signaling cascades, apoptosis and NF-kappa-B signaling. Interacts with BAG4, BABAM2, FEM1B, GRB2, SQSTM1 and TRPC4AP. Interacts with DAB2IP. Interacts directly with NOL3 (via CARD domain); inhibits TNF-signaling pathway. Interacts with SH3RF2, TRADD and RIPK1. SH3RF2 facilitates the recruitment of RIPK1 and TRADD to TNFRSF1A in a TNF-alpha-dependent process. Interacts with PGLYRP1; this interaction is important for cell death induction. Interacts (via death domain) with MADD (via death domain). Post-translationally, (Microbial infection) Glycosylated at Arg-376 by S.typhimurium protein Ssek3: arginine GlcNAcylation prevents homotypic/heterotypic death domain interactions.

It is found in the cell membrane. The protein resides in the golgi apparatus membrane. Its function is as follows. Receptor for TNFSF2/TNF-alpha and homotrimeric TNFSF1/lymphotoxin-alpha. The adapter molecule FADD recruits caspase-8 to the activated receptor. The resulting death-inducing signaling complex (DISC) performs caspase-8 proteolytic activation which initiates the subsequent cascade of caspases (aspartate-specific cysteine proteases) mediating apoptosis. The protein is Tumor necrosis factor receptor superfamily member 1A (Tnfrsf1a) of Mus musculus (Mouse).